The following is a 130-amino-acid chain: MNKNEVKTYLLKKNTFQNISITKDAIEQILFLINLNSDNIGIRLSIKKSGCAGFRYSMKLLKASELKKEKDEKEVSFFYQNILIYIYSKDIPFLEGIRIDFVKNNINKIFKFYNTKLEKFCGCGESFSIN.

Belongs to the HesB/IscA family.

This is an uncharacterized protein from Buchnera aphidicola subsp. Acyrthosiphon pisum (strain APS) (Acyrthosiphon pisum symbiotic bacterium).